Here is a 493-residue protein sequence, read N- to C-terminus: Chitinase 1 (493 aa).

The N-terminal stretch at 1-20 is a signal peptide; it reads MISCNILGITIAAFITSTLA. Residues 27 to 318 form the GH18 domain; that stretch reads VNVMYYWGQN…HGSSAALGQA (292 aa). Glutamate 164 acts as the Proton donor in catalysis.

The protein belongs to the glycosyl hydrolase 18 family. Chitinase class III subfamily.

It carries out the reaction Random endo-hydrolysis of N-acetyl-beta-D-glucosaminide (1-&gt;4)-beta-linkages in chitin and chitodextrins.. This Rhizopus niveus protein is Chitinase 1 (CHI1).